The sequence spans 272 residues: Shikimate dehydrogenase (NADP(+)) (272 aa).

Shikimate-binding positions include 14–16 (SKS) and T61. The active-site Proton acceptor is the K65. NADP(+) is bound at residue E77. 2 residues coordinate shikimate: N86 and D102. NADP(+) is bound by residues 126–130 (GAGGA), 149–154 (NRTASR), and M213. Position 215 (Y215) interacts with shikimate. Residue G237 coordinates NADP(+).

This sequence belongs to the shikimate dehydrogenase family. As to quaternary structure, homodimer.

The catalysed reaction is shikimate + NADP(+) = 3-dehydroshikimate + NADPH + H(+). It functions in the pathway metabolic intermediate biosynthesis; chorismate biosynthesis; chorismate from D-erythrose 4-phosphate and phosphoenolpyruvate: step 4/7. Its function is as follows. Involved in the biosynthesis of the chorismate, which leads to the biosynthesis of aromatic amino acids. Catalyzes the reversible NADPH linked reduction of 3-dehydroshikimate (DHSA) to yield shikimate (SA). The protein is Shikimate dehydrogenase (NADP(+)) of Salmonella heidelberg (strain SL476).